Reading from the N-terminus, the 441-residue chain is Histidinol dehydrogenase homolog (441 aa).

His-266 contacts Zn(2+). Residues Glu-334 and His-335 each act as proton acceptor in the active site. His-427 serves as a coordination point for Zn(2+).

The protein belongs to the histidinol dehydrogenase family. It depends on Zn(2+) as a cofactor.

The sequence is that of Histidinol dehydrogenase homolog from Cereibacter sphaeroides (strain ATCC 17023 / DSM 158 / JCM 6121 / CCUG 31486 / LMG 2827 / NBRC 12203 / NCIMB 8253 / ATH 2.4.1.) (Rhodobacter sphaeroides).